The following is a 130-amino-acid chain: Translation initiation factor 5A (130 aa).

Lys36 is subject to Hypusine.

The protein belongs to the eIF-5A family.

Its subcellular location is the cytoplasm. In terms of biological role, functions by promoting the formation of the first peptide bond. The polypeptide is Translation initiation factor 5A (eif5a) (Methanothermobacter thermautotrophicus (strain ATCC 29096 / DSM 1053 / JCM 10044 / NBRC 100330 / Delta H) (Methanobacterium thermoautotrophicum)).